The chain runs to 682 residues: Glutamine--fructose-6-phosphate aminotransferase [isomerizing] 2 (682 aa).

C2 acts as the For GATase activity in catalysis. The Glutamine amidotransferase type-2 domain maps to 2 to 288 (CGIFAYMNYR…DDDIAAVADG (287 aa)). S244 is modified (phosphoserine). SIS domains are found at residues 360 to 499 (HLKE…DRIS) and 531 to 672 (LALE…VDFP). Residues 377 to 378 (TS), 422 to 424 (SQS), T427, and H578 each bind substrate.

It carries out the reaction D-fructose 6-phosphate + L-glutamine = D-glucosamine 6-phosphate + L-glutamate. The protein operates within nucleotide-sugar biosynthesis; UDP-N-acetyl-alpha-D-glucosamine biosynthesis; alpha-D-glucosamine 6-phosphate from D-fructose 6-phosphate: step 1/1. Functionally, controls the flux of glucose into the hexosamine pathway. Most likely involved in regulating the availability of precursors for N- and O-linked glycosylation of proteins. This is Glutamine--fructose-6-phosphate aminotransferase [isomerizing] 2 (GFPT2) from Bos taurus (Bovine).